The following is a 139-amino-acid chain: MSTQLVKIGTWGGNGGGRVDLSVLPRSLKSVTIRSGAAIDAIAFTYIGTDGKEHLAGPWGGGGGNPTTITLGSQEFVKGISGTFTNVVTNLKIVTNVTTYNFGQGGGTAFSLPLQSGSVVGFFGRAGALVDSIGVYVHI.

Residues 5 to 139 (LVKIGTWGGN…VDSIGVYVHI (135 aa)) enclose the Jacalin-type lectin domain.

Expressed mainly in roots.

In Oryza sativa subsp. indica (Rice), this protein is Protein GOS9 (GOS9).